We begin with the raw amino-acid sequence, 172 residues long: Protein-export protein SecB (172 aa).

It belongs to the SecB family. In terms of assembly, homotetramer, a dimer of dimers. One homotetramer interacts with 1 SecA dimer.

The protein resides in the cytoplasm. Its function is as follows. One of the proteins required for the normal export of preproteins out of the cell cytoplasm. It is a molecular chaperone that binds to a subset of precursor proteins, maintaining them in a translocation-competent state. It also specifically binds to its receptor SecA. In Maricaulis maris (strain MCS10) (Caulobacter maris), this protein is Protein-export protein SecB.